Reading from the N-terminus, the 384-residue chain is Chorismate synthase (384 aa).

NADP(+) contacts are provided by R40 and R46. Residues 128–130 (RAS), G292, 307–311 (KPIPT), and R333 contribute to the FMN site.

It belongs to the chorismate synthase family. As to quaternary structure, homotetramer. It depends on FMNH2 as a cofactor.

It carries out the reaction 5-O-(1-carboxyvinyl)-3-phosphoshikimate = chorismate + phosphate. It participates in metabolic intermediate biosynthesis; chorismate biosynthesis; chorismate from D-erythrose 4-phosphate and phosphoenolpyruvate: step 7/7. Catalyzes the anti-1,4-elimination of the C-3 phosphate and the C-6 proR hydrogen from 5-enolpyruvylshikimate-3-phosphate (EPSP) to yield chorismate, which is the branch point compound that serves as the starting substrate for the three terminal pathways of aromatic amino acid biosynthesis. This reaction introduces a second double bond into the aromatic ring system. This chain is Chorismate synthase, found in Carboxydothermus hydrogenoformans (strain ATCC BAA-161 / DSM 6008 / Z-2901).